The following is a 742-amino-acid chain: Synaptic vesicle glycoprotein 2A (742 aa).

Residues 1–57 are interaction with SYT1; that stretch reads MEEGFRDRAAFIRGAKDIAKEVKKHAAKKVVKGLDRVQDEYSRRSYSRFEEEEDDDD. Residues 1–169 lie on the Cytoplasmic side of the membrane; it reads MEEGFRDRAA…GHGRFQWTLY (169 aa). Residues 40-49 are compositionally biased toward basic and acidic residues; the sequence is EYSRRSYSRF. A disordered region spans residues 40 to 145; the sequence is EYSRRSYSRF…RGEAQRRKDR (106 aa). Residues Ser80 and Ser81 each carry the phosphoserine modification. Residue Thr84 is modified to Phosphothreonine. A compositionally biased stretch (gly residues) spans 122 to 137; sequence VRGGLSDGEGPPGGRG. A Phosphoserine modification is found at Ser127. Residues 170-190 form a helical membrane-spanning segment; that stretch reads FVLGLALMADGVEVFVVGFVL. The Extracellular segment spans residues 191–205; the sequence is PSAEKDMCLSDSNKG. A helical membrane pass occupies residues 206 to 226; it reads MLGLIVYLGMMVGAFLWGGLA. Topologically, residues 227-233 are cytoplasmic; that stretch reads DRLGRRQ. A helical membrane pass occupies residues 234-254; it reads CLLISLSVNSVFAFFSSFVQG. The Extracellular segment spans residues 255-262; sequence YGTFLFCR. The chain crosses the membrane as a helical span at residues 263-283; the sequence is LLSGVGIGGSIPIVFSYFSEF. The Cytoplasmic segment spans residues 284–294; it reads LAQEKRGEHLS. Residues 295 to 315 form a helical membrane-spanning segment; the sequence is WLCMFWMIGGVYAAAMAWAII. Topologically, residues 316–334 are extracellular; sequence PHYGWSFQMGSAYQFHSWR. Residues 335–355 traverse the membrane as a helical segment; it reads VFVLVCAFPSVFAIGALTTQP. The Cytoplasmic segment spans residues 356 to 447; that stretch reads ESPRFFLENG…CFSPEYRRIT (92 aa). Ser393 bears the Phosphoserine mark. A helical membrane pass occupies residues 448-468; it reads LMMMGVWFTMSFSYYGLTVWF. Residues 469–598 lie on the Extracellular side of the membrane; that stretch reads PDMIRHLQAV…GTGEGAYMVY (130 aa). Tyr480 is subject to Phosphotyrosine. N-linked (GlcNAc...) asparagine glycans are attached at residues Asn498 and Asn548. The N-linked (GlcNAc...) asparagine; alternate glycan is linked to Asn573. The N-linked (HexNAc...) asparagine; alternate glycan is linked to Asn573. The helical transmembrane segment at 599–619 threads the bilayer; sequence FVSFLGTLAVLPGNIVSALLM. Residues 620-626 lie on the Cytoplasmic side of the membrane; the sequence is DKIGRLR. Residues 627 to 647 form a helical membrane-spanning segment; the sequence is MLAGSSVLSCVSCFFLSFGNS. At 648 to 651 the chain is on the extracellular side; the sequence is ESAM. A helical transmembrane segment spans residues 652–672; the sequence is IALLCLFGGVSIASWNALDVL. At 673–685 the chain is on the cytoplasmic side; sequence TVELYPSDKRTTA. Residues 686–708 form a helical membrane-spanning segment; it reads FGFLNALCKLAAVLGISIFTSFV. At 709-712 the chain is on the extracellular side; it reads GITK. The helical transmembrane segment at 713 to 731 threads the bilayer; the sequence is AAPILFASAALALGSSLAL. At 732–742 the chain is on the cytoplasmic side; that stretch reads KLPETRGQVLQ.

The protein belongs to the major facilitator superfamily. As to quaternary structure, interacts with SYT1/synaptotagmin-1 in a calcium-dependent manner. Binds the adapter protein complex AP-2. In terms of assembly, (Microbial infection) Interacts with C.botulinum neurotoxin type A1 and type A2 (BoNT/A, botA). Interaction is improved by glycosylation of SV2. (Microbial infection) Copurifies with C.botulinum neurotoxin type B (BoNT/B, botB) and synaptotagmin 1 (SYT1). Interaction does not require glycosylation of SV2 or SYT1 proteins. Another group finds only copurification with SYT1 and SYT2. As to quaternary structure, (Microbial infection) Interacts with C.botulinum neurotoxin type E (BoNT/E). Interaction requires glycosylation of SV2 proteins. In terms of assembly, (Microbial infection) Copurifies with C.botulinum neurotoxin type F (BoNT/F) and synaptotagmin 1 (SYT2). Another group finds only copurification with BoNT/F. Interaction requires SV2 glycosylation. In terms of processing, phosphorylation by CK1 of the N-terminal cytoplasmic domain regulates interaction with SYT1. N-glycosylated, on at least 3 residues. As to expression, widely expressed throughout the brain (at protein level). Expressed by neural and endocrine cells of brain and spinal cord.

It localises to the presynapse. Its subcellular location is the cytoplasmic vesicle. The protein localises to the secretory vesicle. It is found in the synaptic vesicle membrane. Plays a role in the control of regulated secretion in neural and endocrine cells, enhancing selectively low-frequency neurotransmission. Positively regulates vesicle fusion by maintaining the readily releasable pool of secretory vesicles. In terms of biological role, (Microbial infection) Receptor for C.botulinum neurotoxin type A (BoNT/A, botA); the toxin binds via extracellular loop 4. Restores uptake of BoNT/A in mouse cells that are deleted for SV2 receptor. Glycosylation of Asn-573 is not essential for receptor activity, but enhances uptake. Also serves as a receptor for the closely related C.botulinum neurotoxin type A2; glycosylation is not essential but enhances the interaction. Its function is as follows. Possible receptor for C.botulinum neurotoxin type D (BoNT/D, botD); BoNT/D does not bind to extracellular loop 4 as do BoNT/A and BoNT/E, nor to loop 1 or loop 3. Another group does not find a convincing interaction with SV2. Functionally, (Microbial infection) Receptor for C.botulinum neurotoxin type E (BoNT/E); the toxin probably binds via extracellular loop 4 and requires glycosylation of Asn-573. Restores uptake of BoNT/E in mouse cells that are deleted for SV2 receptor. (Microbial infection) Receptor for C.botulinum neurotoxin type F (BoNT/F). Binding requires glycosylation of Asn-573. The polypeptide is Synaptic vesicle glycoprotein 2A (Sv2a) (Rattus norvegicus (Rat)).